The primary structure comprises 131 residues: Large ribosomal subunit protein bL19 (131 aa).

The tract at residues 110-131 (KSARIAERTDDRAKKAKATAAE) is disordered. Residues 113–122 (RIAERTDDRA) are compositionally biased toward basic and acidic residues.

It belongs to the bacterial ribosomal protein bL19 family.

This protein is located at the 30S-50S ribosomal subunit interface and may play a role in the structure and function of the aminoacyl-tRNA binding site. This is Large ribosomal subunit protein bL19 from Azorhizobium caulinodans (strain ATCC 43989 / DSM 5975 / JCM 20966 / LMG 6465 / NBRC 14845 / NCIMB 13405 / ORS 571).